The primary structure comprises 252 residues: 2-succinyl-6-hydroxy-2,4-cyclohexadiene-1-carboxylate synthase (252 aa).

The protein belongs to the AB hydrolase superfamily. MenH family. Monomer.

It catalyses the reaction 5-enolpyruvoyl-6-hydroxy-2-succinyl-cyclohex-3-ene-1-carboxylate = (1R,6R)-6-hydroxy-2-succinyl-cyclohexa-2,4-diene-1-carboxylate + pyruvate. It functions in the pathway quinol/quinone metabolism; 1,4-dihydroxy-2-naphthoate biosynthesis; 1,4-dihydroxy-2-naphthoate from chorismate: step 3/7. The protein operates within quinol/quinone metabolism; menaquinone biosynthesis. In terms of biological role, catalyzes a proton abstraction reaction that results in 2,5-elimination of pyruvate from 2-succinyl-5-enolpyruvyl-6-hydroxy-3-cyclohexene-1-carboxylate (SEPHCHC) and the formation of 2-succinyl-6-hydroxy-2,4-cyclohexadiene-1-carboxylate (SHCHC). The protein is 2-succinyl-6-hydroxy-2,4-cyclohexadiene-1-carboxylate synthase of Escherichia coli O8 (strain IAI1).